We begin with the raw amino-acid sequence, 154 residues long: Aspartate 1-decarboxylase 1 (154 aa).

Ser-26 acts as the Schiff-base intermediate with substrate; via pyruvic acid in catalysis. Ser-26 is modified (pyruvic acid (Ser)). Thr-58 contributes to the substrate binding site. Catalysis depends on Tyr-59, which acts as the Proton donor. 74–76 (GAA) contacts substrate. The disordered stretch occupies residues 129–154 (VGLVRGDTNSPQPSLSEQAGDPRRAQ). Positions 135-145 (DTNSPQPSLSE) are enriched in polar residues.

The protein belongs to the PanD family. In terms of assembly, heterooctamer of four alpha and four beta subunits. Pyruvate serves as cofactor. Is synthesized initially as an inactive proenzyme, which is activated by self-cleavage at a specific serine bond to produce a beta-subunit with a hydroxyl group at its C-terminus and an alpha-subunit with a pyruvoyl group at its N-terminus.

It localises to the cytoplasm. It carries out the reaction L-aspartate + H(+) = beta-alanine + CO2. The protein operates within cofactor biosynthesis; (R)-pantothenate biosynthesis; beta-alanine from L-aspartate: step 1/1. In terms of biological role, catalyzes the pyruvoyl-dependent decarboxylation of aspartate to produce beta-alanine. The sequence is that of Aspartate 1-decarboxylase 1 from Frankia casuarinae (strain DSM 45818 / CECT 9043 / HFP020203 / CcI3).